Reading from the N-terminus, the 218-residue chain is Ras-related protein Rab11E (218 aa).

Position 20 to 27 (20 to 27) interacts with GTP; the sequence is GDSGVGKS. The Effector region signature appears at 42–50; it reads SKSTIGVEF. GTP contacts are provided by residues 68 to 72 and 126 to 129; these read DTAGQ and NKSD. S-geranylgeranyl cysteine attachment occurs at residues C215 and C216.

It belongs to the small GTPase superfamily. Rab family.

It localises to the cell membrane. In Lotus japonicus (Lotus corniculatus var. japonicus), this protein is Ras-related protein Rab11E (RAB11E).